Here is a 349-residue protein sequence, read N- to C-terminus: UDP-3-O-acylglucosamine N-acyltransferase (349 aa).

Catalysis depends on H246, which acts as the Proton acceptor.

It belongs to the transferase hexapeptide repeat family. LpxD subfamily. Homotrimer.

The catalysed reaction is a UDP-3-O-[(3R)-3-hydroxyacyl]-alpha-D-glucosamine + a (3R)-hydroxyacyl-[ACP] = a UDP-2-N,3-O-bis[(3R)-3-hydroxyacyl]-alpha-D-glucosamine + holo-[ACP] + H(+). The protein operates within bacterial outer membrane biogenesis; LPS lipid A biosynthesis. Its function is as follows. Catalyzes the N-acylation of UDP-3-O-acylglucosamine using 3-hydroxyacyl-ACP as the acyl donor. Is involved in the biosynthesis of lipid A, a phosphorylated glycolipid that anchors the lipopolysaccharide to the outer membrane of the cell. The sequence is that of UDP-3-O-acylglucosamine N-acyltransferase from Trichormus variabilis (strain ATCC 29413 / PCC 7937) (Anabaena variabilis).